The primary structure comprises 484 residues: Cobyric acid synthase (484 aa).

The region spanning 251 to 438 (ALKVAVPVLS…LHGLFGSDAY (188 aa)) is the GATase cobBQ-type domain. The active-site Nucleophile is the Cys-333. Residue His-430 is part of the active site.

It belongs to the CobB/CobQ family. CobQ subfamily.

It functions in the pathway cofactor biosynthesis; adenosylcobalamin biosynthesis. Catalyzes amidations at positions B, D, E, and G on adenosylcobyrinic A,C-diamide. NH(2) groups are provided by glutamine, and one molecule of ATP is hydrogenolyzed for each amidation. This is Cobyric acid synthase from Sinorhizobium fredii (strain NBRC 101917 / NGR234).